A 453-amino-acid polypeptide reads, in one-letter code: Bifunctional protein GlmU (453 aa).

Positions 1-225 (MNIVILAAGT…EWETLGVNSK (225 aa)) are pyrophosphorylase. UDP-N-acetyl-alpha-D-glucosamine contacts are provided by residues 6–9 (LAAG), lysine 20, glutamine 71, 76–77 (GT), 98–100 (YGD), glycine 135, glutamate 150, asparagine 165, and asparagine 223. Aspartate 100 is a binding site for Mg(2+). Residue asparagine 223 coordinates Mg(2+). Residues 226–246 (AQLAELERIHQRNLADALLAA) are linker. Positions 247 to 453 (GVTLADPARI…GYVRPVKKKS (207 aa)) are N-acetyltransferase. Residues arginine 329 and lysine 347 each coordinate UDP-N-acetyl-alpha-D-glucosamine. The active-site Proton acceptor is the histidine 359. Residues tyrosine 362 and asparagine 373 each contribute to the UDP-N-acetyl-alpha-D-glucosamine site. Acetyl-CoA is bound by residues alanine 376, 382–383 (NY), serine 401, and alanine 419.

This sequence in the N-terminal section; belongs to the N-acetylglucosamine-1-phosphate uridyltransferase family. The protein in the C-terminal section; belongs to the transferase hexapeptide repeat family. As to quaternary structure, homotrimer. Mg(2+) serves as cofactor.

The protein localises to the cytoplasm. The enzyme catalyses alpha-D-glucosamine 1-phosphate + acetyl-CoA = N-acetyl-alpha-D-glucosamine 1-phosphate + CoA + H(+). It catalyses the reaction N-acetyl-alpha-D-glucosamine 1-phosphate + UTP + H(+) = UDP-N-acetyl-alpha-D-glucosamine + diphosphate. It functions in the pathway nucleotide-sugar biosynthesis; UDP-N-acetyl-alpha-D-glucosamine biosynthesis; N-acetyl-alpha-D-glucosamine 1-phosphate from alpha-D-glucosamine 6-phosphate (route II): step 2/2. It participates in nucleotide-sugar biosynthesis; UDP-N-acetyl-alpha-D-glucosamine biosynthesis; UDP-N-acetyl-alpha-D-glucosamine from N-acetyl-alpha-D-glucosamine 1-phosphate: step 1/1. Its pathway is bacterial outer membrane biogenesis; LPS lipid A biosynthesis. Its function is as follows. Catalyzes the last two sequential reactions in the de novo biosynthetic pathway for UDP-N-acetylglucosamine (UDP-GlcNAc). The C-terminal domain catalyzes the transfer of acetyl group from acetyl coenzyme A to glucosamine-1-phosphate (GlcN-1-P) to produce N-acetylglucosamine-1-phosphate (GlcNAc-1-P), which is converted into UDP-GlcNAc by the transfer of uridine 5-monophosphate (from uridine 5-triphosphate), a reaction catalyzed by the N-terminal domain. The sequence is that of Bifunctional protein GlmU from Burkholderia mallei (strain NCTC 10247).